Reading from the N-terminus, the 59-residue chain is Large ribosomal subunit protein bL32 (59 aa).

Positions 1-25 (MAVQQNKKSPSKRGMHRAHDFLTAP) are disordered.

The protein belongs to the bacterial ribosomal protein bL32 family.

The protein is Large ribosomal subunit protein bL32 of Azoarcus sp. (strain BH72).